We begin with the raw amino-acid sequence, 175 residues long: RNA pyrophosphohydrolase (175 aa).

The 144-residue stretch at 6 to 149 (GYRPNVGIVI…KRDVYRRVMK (144 aa)) folds into the Nudix hydrolase domain. The short motif at 38 to 59 (GGINPGETAEQAMYRELFEEVG) is the Nudix box element.

It belongs to the Nudix hydrolase family. RppH subfamily. It depends on a divalent metal cation as a cofactor.

In terms of biological role, accelerates the degradation of transcripts by removing pyrophosphate from the 5'-end of triphosphorylated RNA, leading to a more labile monophosphorylated state that can stimulate subsequent ribonuclease cleavage. The protein is RNA pyrophosphohydrolase of Erwinia tasmaniensis (strain DSM 17950 / CFBP 7177 / CIP 109463 / NCPPB 4357 / Et1/99).